The primary structure comprises 591 residues: Solute carrier family 40 member 2, chloroplastic (591 aa).

A chloroplast-targeting transit peptide spans 1 to 66; it reads MGMVTATAAA…RCYITNVEVD (66 aa). 11 consecutive transmembrane segments (helical) span residues 159-179, 206-226, 242-262, 293-313, 318-338, 391-411, 419-439, 452-472, 482-502, 518-540, and 547-569; these read WPAA…VGFF, GLNA…IYAM, WFIA…ALGV, LVCE…YHPV, IACG…QLIN, VATV…MTAL, PSIV…ATFI, AGAA…VVYW, LLIF…YDVV, LIGG…MAII, and FGFL…CQWL.

Belongs to the ferroportin (FP) (TC 2.A.100) family. SLC40A subfamily.

The protein resides in the membrane. It localises to the plastid. The protein localises to the chloroplast envelope. May be involved in iron transport and iron homeostasis. The polypeptide is Solute carrier family 40 member 2, chloroplastic (Oryza sativa subsp. japonica (Rice)).